A 108-amino-acid polypeptide reads, in one-letter code: Dormancy-associated protein homolog 1 (108 aa).

Residues 28–59 are disordered; it reads DIKGVGEGSSSKTVAAVAGSPGTPTTPGSARK. Residue S47 is modified to Phosphoserine. The residue at position 50 (T50) is a Phosphothreonine.

It belongs to the DRM1/ARP family. In terms of tissue distribution, expressed mainly in the low bolt.

The chain is Dormancy-associated protein homolog 1 from Arabidopsis thaliana (Mouse-ear cress).